Here is a 254-residue protein sequence, read N- to C-terminus: MTKLEVCCYSVDCAQIAEKAGADRVELCCGQSEGGVTPSVGALMQARETVTIPVHPIVRPRGGDFCYSSNDFTIMKNDIARIRDLGFAGVVVGVLDTDGHIDMPRMREIMSVSGSLAVTFHRAFDMCQNPMIALKQLAELNVARILTSGQQQNAELGLALLKDLVAATKDQGPIIMAGAGVRLTNMQKFIDAGIRELHSSAGRTVPSTMRYRKAGVTMCADSDVDEFSHYCVDGEVVEAMKSLLVMGSPLAKHT.

It belongs to the CutC family.

It is found in the cytoplasm. This chain is PF03932 family protein CutC, found in Yersinia pestis bv. Antiqua (strain Antiqua).